A 1030-amino-acid polypeptide reads, in one-letter code: MEEQVANAIEIAGNPTSDQTLKAQAFDYLNQLRTDPSGWQVCLTLFTKTPQYSEIIRHVALEVVNSAAQAGLIDPQALGYVRDGLMAYLRQVYGQDNVTPDSTSIQNKIAQTITFLFSALYGNGWETFFDDLLSLTYKSSASTSHDNPLGIVFYLRVINAIHEEIGDVLVSRSRTEQDKANLLKDLIRSRDMQKIASSWQQILSEWRDGNDTIVEMSLRAVGSWVSWIDIGLVVNQTTLDLLFQQLGRAQKAELREGEEKVRDAAVDVFTEIIGKKMKPEDKMDMIIFLNLDTIVTQLSNSPPLHENRFTFKYDTDLAETVAKLVNITVIDIVRALEQDTVTADCKAKATGLLQAFLPHILRYFSDEYDEVCSTVIPCVSDLLSYLRKIAKVNPALAEQHSSILLPILKAIIAKMRYDETSSWGDEDDQTDEAEFQELRKRLGVLQQIVASVNEQLCMEAVSEVVGNTFESLRQSGAQLDWRDLDLALHEMFLFGEVAVRAGSLYSKGVPNNAAAERLVEMMLKMVESDIRSFTHPATQLQYMEICVRYSSFFQYHTHLIPTVLESFLQLVHHPIKKVKTRSWYLFQRLVKQLRTHVGNVAQTVVEALGDLLVINAELPTEGSDGDEMSSEDHEGSADAVFNSQLYLFEAVGIICSTPTVPADKQVLYAQSVLNPVFMDMEKNLAPAKANDERALLQIHHDIMALGTLARGFSDWMPGTSSPASLPAPEVSEAFMQVSEATLVALESLKTSFNVRTAARFAFSRLIGVLGSRILPQLPRWIDGLLTQTSSRDEMALFLRLLDQVIFGFKSEIYSILDALLTPFLQRVFSGIADAPTGTDDEVQLAELKREYLNFLLAVLNNELGAVIISERNQPMFETVIGTIEHFAKDIEDFTTAKMAFSVLSKMGSSWGGPDITPEGANGAAPQQQALPGFGQFMITRLSPLCWALPATPSFNSKDAQAKQVLAEAGGLQRTIYAKTGMEYLQYLRDRELPGMGMGADLVEEFVGALGRLDMKGFRQFFPSFIQRLSA.

It belongs to the exportin family.

The protein resides in the nucleus. It localises to the cytoplasm. In terms of biological role, tRNA nucleus export receptor which facilitates tRNA translocation across the nuclear pore complex. Involved in pre-tRNA splicing, probably by affecting the interaction of pre-tRNA with splicing endonuclease. This Aspergillus niger (strain ATCC MYA-4892 / CBS 513.88 / FGSC A1513) protein is Exportin-T (los1).